The sequence spans 148 residues: Large ribosomal subunit protein uL15 (148 aa).

Over residues 1 to 30 the composition is skewed to basic residues; the sequence is MPSRLRKTRKLRGHVSHGHGRIGKHRKHPG. The segment at 1–38 is disordered; that stretch reads MPSRLRKTRKLRGHVSHGHGRIGKHRKHPGGRGNAGGL. Histidine 39 is modified ((3S)-3-hydroxyhistidine). An N6-acetyllysine mark is found at lysine 47 and lysine 55. Residue serine 68 is modified to Phosphoserine. Lysine 110 bears the N6-acetyllysine mark.

Belongs to the universal ribosomal protein uL15 family. As to quaternary structure, component of the large ribosomal subunit. Post-translationally, hydroxylated on His-39 by MINA.

The protein resides in the cytoplasm. In terms of biological role, component of the large ribosomal subunit. The ribosome is a large ribonucleoprotein complex responsible for the synthesis of proteins in the cell. The protein is Large ribosomal subunit protein uL15 (RPL27A) of Homo sapiens (Human).